The following is a 431-amino-acid chain: UDP-N-acetylmuramate--L-alanine ligase (431 aa).

Residue 108-114 (GAHGKST) participates in ATP binding.

Belongs to the MurCDEF family.

The protein resides in the cytoplasm. The catalysed reaction is UDP-N-acetyl-alpha-D-muramate + L-alanine + ATP = UDP-N-acetyl-alpha-D-muramoyl-L-alanine + ADP + phosphate + H(+). It participates in cell wall biogenesis; peptidoglycan biosynthesis. Its function is as follows. Cell wall formation. This Campylobacter jejuni (strain RM1221) protein is UDP-N-acetylmuramate--L-alanine ligase.